The following is a 355-amino-acid chain: Beta-ketoacyl-[acyl-carrier-protein] synthase III 1 (355 aa).

Residues C122 and H280 contribute to the active site. The tract at residues 281 to 285 is ACP-binding; the sequence is QANER. The active site involves N311.

This sequence belongs to the thiolase-like superfamily. FabH family. In terms of assembly, homodimer.

The protein localises to the cytoplasm. The catalysed reaction is malonyl-[ACP] + acetyl-CoA + H(+) = 3-oxobutanoyl-[ACP] + CO2 + CoA. Its pathway is lipid metabolism; fatty acid biosynthesis. Functionally, catalyzes the condensation reaction of fatty acid synthesis by the addition to an acyl acceptor of two carbons from malonyl-ACP. Catalyzes the first condensation reaction which initiates fatty acid synthesis and may therefore play a role in governing the total rate of fatty acid production. Possesses both acetoacetyl-ACP synthase and acetyl transacylase activities. Its substrate specificity determines the biosynthesis of branched-chain and/or straight-chain of fatty acids. The sequence is that of Beta-ketoacyl-[acyl-carrier-protein] synthase III 1 from Streptomyces avermitilis (strain ATCC 31267 / DSM 46492 / JCM 5070 / NBRC 14893 / NCIMB 12804 / NRRL 8165 / MA-4680).